Consider the following 134-residue polypeptide: Cytochrome b (134 aa).

Helical transmembrane passes span 33 to 53 (FGSL…FLAM), 77 to 98 (WLIR…FLHV), and 113 to 133 (WNIG…GYVL). Heme b-binding residues include histidine 83 and histidine 97.

Belongs to the cytochrome b family. As to quaternary structure, the cytochrome bc1 complex contains 11 subunits: 3 respiratory subunits (MT-CYB, CYC1 and UQCRFS1), 2 core proteins (UQCRC1 and UQCRC2) and 6 low-molecular weight proteins (UQCRH/QCR6, UQCRB/QCR7, UQCRQ/QCR8, UQCR10/QCR9, UQCR11/QCR10 and a cleavage product of UQCRFS1). This cytochrome bc1 complex then forms a dimer. Heme b is required as a cofactor.

It localises to the mitochondrion inner membrane. Component of the ubiquinol-cytochrome c reductase complex (complex III or cytochrome b-c1 complex) that is part of the mitochondrial respiratory chain. The b-c1 complex mediates electron transfer from ubiquinol to cytochrome c. Contributes to the generation of a proton gradient across the mitochondrial membrane that is then used for ATP synthesis. The polypeptide is Cytochrome b (MT-CYB) (Sorex shinto sadonis (Sado shrew)).